We begin with the raw amino-acid sequence, 786 residues long: Cas scaffolding protein family member 4 (786 aa).

The SH3 domain occupies 11–73 (PKALLARALY…PANRLQILTE (63 aa)). A phosphoserine mark is found at Ser200 and Ser249. Residues 262–295 (SFAEESRPHALPSSSSTFYNPPSGRSRSLTPQLN) are disordered. Residues 273–295 (PSSSSTFYNPPSGRSRSLTPQLN) are compositionally biased toward polar residues. At Ser305 the chain carries Phosphoserine. Disordered regions lie at residues 361–429 (QAGK…SEES) and 612–670 (IQPP…ERKP). Positions 364-373 (KELEKAKEVS) are enriched in basic and acidic residues. The span at 374–391 (ENSAGHNSSWFSRRTTSP) shows a compositional bias: polar residues. 2 positions are modified to phosphoserine: Ser376 and Ser390. Over residues 399 to 427 (SGSSSDSRASIVSSCSTTSTDDSSSSSSE) the composition is skewed to low complexity. Positions 630–642 (KQREDEHSSELLK) are enriched in basic and acidic residues.

It belongs to the CAS family. Interacts (via SH3 domain) with PTK2/FAK1 (via C-terminus). In terms of processing, phosphorylated on tyrosines by SRC. As to expression, expressed abundantly in lung and spleen. Also highly expressed in ovarian and leukemia cell lines.

It localises to the cytoplasm. Its subcellular location is the cytoskeleton. The protein resides in the cell junction. It is found in the focal adhesion. Docking protein that plays a role in tyrosine kinase-based signaling related to cell adhesion and cell spreading. Regulates PTK2/FAK1 activity, focal adhesion integrity, and cell spreading. This Homo sapiens (Human) protein is Cas scaffolding protein family member 4 (CASS4).